A 187-amino-acid chain; its full sequence is UPF0301 protein CT0663 (187 aa).

Belongs to the UPF0301 (AlgH) family.

In Chlorobaculum tepidum (strain ATCC 49652 / DSM 12025 / NBRC 103806 / TLS) (Chlorobium tepidum), this protein is UPF0301 protein CT0663.